A 324-amino-acid chain; its full sequence is MNNLVKIATHSGTFHADEALAVYMLRRLDRFSGAQIVRSRDPQVLDSCDIIVDVGGKYDGIKYFDHHQREFNDTFSPKYSTRLSSAGLIYKHFGREVIHAVLPQLKINEQDLETLYEKVYQSFVEGLDANDNGISAYPAGLKPSFKAAMSLPEMVSSFLPAWNSEKQDDQTYLECFQKASDLMGTWFVRSVEHYALSWLPAKTLAREAILKAKDSPILIVDQFFPWKGHLFDIEKELGIENQFKYAIYSDGKAWRVQAVSIDPTSFTCRLPLPEPWRGIRDEKLSELTGIPGCIFVHASGFIGGNQTFEGALEMARKALDFPQN.

Belongs to the MYG1 family.

This Schizosaccharomyces pombe (strain 972 / ATCC 24843) (Fission yeast) protein is MYG1 protein C694.04c.